The sequence spans 741 residues: MEQTYQYAWIIPFLPLPVPMLIGLGLLLFPTATKSLRRMWAFQSVFLLSIVMILSMNLSIQQINSSSVYQYVWSWIINNDFSLEFGYLIDPLTSIMSILITTVGIMVLIYSDNYMSHDHGYLRFFAYMSFFSTSMLGLVTSSNLIQIYIFWELVGVCSYLLIGFWFTRPVAAKACQKAFVTNRVGDFGLLLGILGFYWITGSFEFSDLFQIFNNLISNNEVNFLFVTLCAILLFAGAIAKSAQFPLHVWLPDAMEGPTPISALIHAATMVAAGIFLVARLMPLFIVIPHIMNFISLIGIITVFLGATLALAQKDIKRGLAYSTMSQLGYMMLALGMGSYRSALFHLITHAYSKALLFLGSGSVIHSMETLVGYCPKKSQNMVLMGGLTKHVPITKNSFLLGTLSLCGIPPLACFWSKDEILNDSWLYSPIFGIIAWSTAGLTAFYMCRIYLLTFEGHLNVHFQNYSGKSNTPFYSISLWGKEGSKISNKNFRLLTLLKMNKNARPSFFSNRVYKIDENVRNRIQPFLSIPHFGNTKTYSYPYESDNTMLFPILVLILFTLFVGFLGIPFTQDVDILSKWLTPSINLLHKNSNNLIDWYEFSKDAFFSVSIASFGIFIAFFLYKPVYSTFQNLDFLNAFVKMGPNRIFYDKIKNAIYDWSYNRGYIDAFYGRFLTAGMRKLADFAHFFDRRIIDAIPNGVGLMSFFLAEVIKSVGGGRISSYLFFYFSYVAIFLLIYYFFNL.

16 helical membrane passes run 9 to 29 (WIIP…LLLF), 40 to 60 (WAFQ…NLSI), 89 to 109 (IDPL…MVLI), 125 to 145 (FAYM…SNLI), 147 to 167 (IYIF…FWFT), 185 to 205 (GDFG…SFEF), 219 to 239 (NEVN…GAIA), 258 to 278 (TPIS…FLVA), 283 to 303 (LFIV…ITVF), 327 to 347 (LGYM…FHLI), 354 to 374 (ALLF…VGYC), 396 to 416 (NSFL…CFWS), 425 to 445 (WLYS…TAFY), 549 to 569 (LFPI…GIPF), 605 to 625 (FFSV…YKPV), and 721 to 741 (YLFF…FFNL).

It belongs to the complex I subunit 5 family. As to quaternary structure, NDH is composed of at least 16 different subunits, 5 of which are encoded in the nucleus.

The protein localises to the plastid. It is found in the chloroplast thylakoid membrane. The catalysed reaction is a plastoquinone + NADH + (n+1) H(+)(in) = a plastoquinol + NAD(+) + n H(+)(out). It catalyses the reaction a plastoquinone + NADPH + (n+1) H(+)(in) = a plastoquinol + NADP(+) + n H(+)(out). NDH shuttles electrons from NAD(P)H:plastoquinone, via FMN and iron-sulfur (Fe-S) centers, to quinones in the photosynthetic chain and possibly in a chloroplast respiratory chain. The immediate electron acceptor for the enzyme in this species is believed to be plastoquinone. Couples the redox reaction to proton translocation, and thus conserves the redox energy in a proton gradient. The chain is NAD(P)H-quinone oxidoreductase subunit 5, chloroplastic (ndhF) from Cichorium intybus (Chicory).